The following is a 167-amino-acid chain: cAMP-dependent protein kinase type I-alpha regulatory subunit (167 aa).

The residue at position 12 (Thr-12) is a Phosphothreonine. 2 positions are modified to phosphoserine: Ser-14 and Ser-20. The Pseudophosphorylation motif motif lies at 30–33 (RGAI). At Ser-34 the chain carries Phosphoserine. 3',5'-cyclic AMP-binding positions include 51 to 78 (LFSH…SKVS), 79 to 167 (ILES…ILKR), Glu-147, and Arg-156. Phosphoserine is present on Ser-82.

It belongs to the cAMP-dependent kinase regulatory chain family. As to quaternary structure, the inactive holoenzyme is composed of two regulatory chains and two catalytic chains. Activation by cAMP releases the two active catalytic monomers and the regulatory dimer. Interacts with PRKACA and PRKACB. PRKAR1A also interacts with RFC2; the complex may be involved in cell survival. Interacts with AKAP4. Interacts with RARA; the interaction occurs in the presence of cAMP or FSH and regulates RARA transcriptional activity. Interacts with the phosphorylated form of PJA2. Interacts with CBFA2T3. Interacts with PRKX; regulates this cAMP-dependent protein kinase. Interacts with smAKAP; this interaction may target PRKAR1A to the plasma membrane. Interacts with AICDA. The pseudophosphorylation site binds to the substrate-binding region of the catalytic chain, resulting in the inhibition of its activity.

It localises to the cell membrane. Regulatory subunit of the cAMP-dependent protein kinases involved in cAMP signaling in cells. The polypeptide is cAMP-dependent protein kinase type I-alpha regulatory subunit (Mesocricetus auratus (Golden hamster)).